A 306-amino-acid polypeptide reads, in one-letter code: 4-hydroxybenzoate geranyltransferase 2 (306 aa).

Helical transmembrane passes span 38–58, 61–81, 119–139, 153–173, 178–198, 229–249, 251–271, and 285–305; these read IGSW…ADLG, PKML…GCTI, LFIG…LAIV, ITYW…LLGS, GSVV…WTLV, IWIT…GFIV, IGLP…WQIF, and FVSN…GRLF.

Belongs to the UbiA prenyltransferase family. The cofactor is Mg(2+). In terms of tissue distribution, expressed only in roots.

The protein localises to the endoplasmic reticulum membrane. The enzyme catalyses 4-hydroxybenzoate + (2E)-geranyl diphosphate = 3-geranyl-4-hydroxybenzoate + diphosphate. In terms of biological role, prenyltransferase involved in the biosynthesis of shikonin, a naphthoquinone secondary metabolite. Could accept only geranyl diphosphate and not dimethylallyl diphosphate, farnesyl diphosphate, or geranylgeranyl diphosphate as substrate. The chain is 4-hydroxybenzoate geranyltransferase 2 (PGT-2) from Lithospermum erythrorhizon (Purple gromwell).